An 80-amino-acid polypeptide reads, in one-letter code: Exodeoxyribonuclease 7 small subunit (80 aa).

Belongs to the XseB family. In terms of assembly, heterooligomer composed of large and small subunits.

Its subcellular location is the cytoplasm. It catalyses the reaction Exonucleolytic cleavage in either 5'- to 3'- or 3'- to 5'-direction to yield nucleoside 5'-phosphates.. In terms of biological role, bidirectionally degrades single-stranded DNA into large acid-insoluble oligonucleotides, which are then degraded further into small acid-soluble oligonucleotides. The protein is Exodeoxyribonuclease 7 small subunit of Streptomyces avermitilis (strain ATCC 31267 / DSM 46492 / JCM 5070 / NBRC 14893 / NCIMB 12804 / NRRL 8165 / MA-4680).